The sequence spans 701 residues: Glycine--tRNA ligase beta subunit (701 aa).

This sequence belongs to the class-II aminoacyl-tRNA synthetase family. Tetramer of two alpha and two beta subunits.

It localises to the cytoplasm. It catalyses the reaction tRNA(Gly) + glycine + ATP = glycyl-tRNA(Gly) + AMP + diphosphate. This Nitratidesulfovibrio vulgaris (strain DSM 19637 / Miyazaki F) (Desulfovibrio vulgaris) protein is Glycine--tRNA ligase beta subunit.